The primary structure comprises 220 residues: Ribonuclease HII (220 aa).

An RNase H type-2 domain is found at 16–216 (PVFAGIDEAG…VRPNPAAEEQ (201 aa)). D22, E23, and D114 together coordinate a divalent metal cation.

It belongs to the RNase HII family. Mn(2+) serves as cofactor. Mg(2+) is required as a cofactor.

It is found in the cytoplasm. It catalyses the reaction Endonucleolytic cleavage to 5'-phosphomonoester.. In terms of biological role, endonuclease that specifically degrades the RNA of RNA-DNA hybrids. This Nitratidesulfovibrio vulgaris (strain ATCC 29579 / DSM 644 / CCUG 34227 / NCIMB 8303 / VKM B-1760 / Hildenborough) (Desulfovibrio vulgaris) protein is Ribonuclease HII.